Here is a 429-residue protein sequence, read N- to C-terminus: GDP-fucose protein O-fucosyltransferase 2 (429 aa).

A signal peptide spans 1-21 (MATLSFVFLLLGAVSWPPASA). A GDP-beta-L-fucose-binding site is contributed by 53 to 57 (PEGFN). Glutamate 54 (proton acceptor) is an active-site residue. A disulfide bond links cysteine 161 and cysteine 192. N-linked (GlcNAc...) asparagine glycosylation is found at asparagine 189, asparagine 209, and asparagine 259. GDP-beta-L-fucose is bound by residues 292–294 (HLR), aspartate 371, and 388–389 (TF). A disulfide bond links cysteine 412 and cysteine 419.

It belongs to the glycosyltransferase 68 family. Isoform A is expressed in fetal liver and peripheral blood lymphocytes. Isoform B is expressed in spleen, lung, testis, bone marrow, thymus, pancreas, prostate, fetal brain, fetal liver and fetal kidney. Isoform C is expressed in brain, heart, spleen, liver, lung, stomach, testis, placenta, skin, thymus, pancreas, mammary gland, prostate, fetal brain, fetal liver and fetal heart.

The protein localises to the endoplasmic reticulum. Its subcellular location is the golgi apparatus. It catalyses the reaction L-seryl-[protein] + GDP-beta-L-fucose = 3-O-(alpha-L-fucosyl)-L-seryl-[protein] + GDP + H(+). The enzyme catalyses L-threonyl-[protein] + GDP-beta-L-fucose = 3-O-(alpha-L-fucosyl)-L-threonyl-[protein] + GDP + H(+). The protein operates within protein modification; protein glycosylation. With respect to regulation, inhibited by EDTA and by Zn(2+). Functionally, catalyzes the reaction that attaches fucose through an O-glycosidic linkage to a conserved serine or threonine residue in the consensus sequence C1-X-X-S/T-C2 of thrombospondin type I repeats (TSRs) where C1 and C2 are the first and second cysteines of the repeat, respectively. O-fucosylates members of several protein families including the ADAMTS, the thrombospondin (TSP) and spondin families. Required for the proper secretion of ADAMTS family members such as ADAMTSL1 and ADAMTS13. The O-fucosylation of TSRs is also required for restricting epithelial to mesenchymal transition (EMT), maintaining the correct patterning of mesoderm and localization of the definite endoderm. The chain is GDP-fucose protein O-fucosyltransferase 2 (POFUT2) from Homo sapiens (Human).